Consider the following 456-residue polypeptide: Bifunctional protein GlmU (456 aa).

A pyrophosphorylase region spans residues 1-229 (MLNNAMSVVI…LSEVEGVNNR (229 aa)). UDP-N-acetyl-alpha-D-glucosamine contacts are provided by residues 11-14 (LAAG), lysine 25, glutamine 76, 81-82 (GT), 103-105 (YGD), glycine 140, glutamate 154, asparagine 169, and asparagine 227. Residue aspartate 105 participates in Mg(2+) binding. Asparagine 227 contacts Mg(2+). The interval 230–250 (LQLSRLERVYQSEQAEKLLLA) is linker. Residues 251–456 (GVMLRDPARF…EGWRRPVKKK (206 aa)) are N-acetyltransferase. 2 residues coordinate UDP-N-acetyl-alpha-D-glucosamine: arginine 333 and lysine 351. Histidine 363 serves as the catalytic Proton acceptor. Tyrosine 366 and asparagine 377 together coordinate UDP-N-acetyl-alpha-D-glucosamine. Acetyl-CoA is bound by residues alanine 380, 386–387 (NY), serine 405, alanine 423, and arginine 440.

This sequence in the N-terminal section; belongs to the N-acetylglucosamine-1-phosphate uridyltransferase family. It in the C-terminal section; belongs to the transferase hexapeptide repeat family. Homotrimer. Mg(2+) serves as cofactor.

It localises to the cytoplasm. The catalysed reaction is alpha-D-glucosamine 1-phosphate + acetyl-CoA = N-acetyl-alpha-D-glucosamine 1-phosphate + CoA + H(+). The enzyme catalyses N-acetyl-alpha-D-glucosamine 1-phosphate + UTP + H(+) = UDP-N-acetyl-alpha-D-glucosamine + diphosphate. Its pathway is nucleotide-sugar biosynthesis; UDP-N-acetyl-alpha-D-glucosamine biosynthesis; N-acetyl-alpha-D-glucosamine 1-phosphate from alpha-D-glucosamine 6-phosphate (route II): step 2/2. It participates in nucleotide-sugar biosynthesis; UDP-N-acetyl-alpha-D-glucosamine biosynthesis; UDP-N-acetyl-alpha-D-glucosamine from N-acetyl-alpha-D-glucosamine 1-phosphate: step 1/1. It functions in the pathway bacterial outer membrane biogenesis; LPS lipid A biosynthesis. Functionally, catalyzes the last two sequential reactions in the de novo biosynthetic pathway for UDP-N-acetylglucosamine (UDP-GlcNAc). The C-terminal domain catalyzes the transfer of acetyl group from acetyl coenzyme A to glucosamine-1-phosphate (GlcN-1-P) to produce N-acetylglucosamine-1-phosphate (GlcNAc-1-P), which is converted into UDP-GlcNAc by the transfer of uridine 5-monophosphate (from uridine 5-triphosphate), a reaction catalyzed by the N-terminal domain. The chain is Bifunctional protein GlmU from Escherichia coli O139:H28 (strain E24377A / ETEC).